Consider the following 461-residue polypeptide: ATP synthase subunit beta (461 aa).

An ATP-binding site is contributed by 151–158 (GGAGVGKT).

Belongs to the ATPase alpha/beta chains family. As to quaternary structure, F-type ATPases have 2 components, CF(1) - the catalytic core - and CF(0) - the membrane proton channel. CF(1) has five subunits: alpha(3), beta(3), gamma(1), delta(1), epsilon(1). CF(0) has three main subunits: a(1), b(2) and c(9-12). The alpha and beta chains form an alternating ring which encloses part of the gamma chain. CF(1) is attached to CF(0) by a central stalk formed by the gamma and epsilon chains, while a peripheral stalk is formed by the delta and b chains.

Its subcellular location is the cell inner membrane. The catalysed reaction is ATP + H2O + 4 H(+)(in) = ADP + phosphate + 5 H(+)(out). Its function is as follows. Produces ATP from ADP in the presence of a proton gradient across the membrane. The catalytic sites are hosted primarily by the beta subunits. The protein is ATP synthase subunit beta of Pseudoalteromonas translucida (strain TAC 125).